The following is a 713-amino-acid chain: Signal transducer and activator of transcription 1 (713 aa).

The SH2 domain maps to 477-574 (WCIGFISKHD…EEMLRYFESE (98 aa)).

It belongs to the transcription factor STAT family. Forms a homodimer or a heterodimer with a related family member.

It localises to the cytoplasm. The protein resides in the nucleus. Functionally, carries out a dual function: signal transduction and activation of transcription. Activated STAT proteins play a role in repression of dauer formation. Neuronal expression is held in check by negative signals through the TGF-beta pathway that target the daf-3 transcription factor. This Caenorhabditis briggsae protein is Signal transducer and activator of transcription 1.